A 757-amino-acid chain; its full sequence is Filensin (757 aa).

A head region spans residues 1–39 (MYRRSYVFQTRKEQYERAEEAPRAAEPDRLAEARAAAPN). Ser-5 carries the post-translational modification Phosphoserine. One can recognise an IF rod domain in the interval 39 to 319 (NLAALQGLGE…RIIENEGNRL (281 aa)). The coil 1A stretch occupies residues 40 to 74 (LAALQGLGERVAAHVQRARALEQRHAVLRRQLDAF). Ala-41 bears the N-acetylalanine mark. Residues 75 to 83 (QRLDELAGP) form a linker 1 region. The segment at 84–183 (EDALARHVEG…RYKKNLLEIQ (100 aa)) is coil 1B. Residues 184 to 200 (TYVTILQQIIQTTPQAA) are linker 12. The interval 201-319 (AITSGMREEK…RIIENEGNRL (119 aa)) is coil 2. The segment at 320–756 (SSAFIETPIT…KKLGEKGSSS (437 aa)) is tail. A phosphoserine mark is found at Ser-340 and Ser-419. 2 disordered regions span residues 406–436 (EGES…GGKI) and 493–705 (GVVV…PPRK). The N-myristoyl glycine moiety is linked to residue Gly-433. Low complexity predominate over residues 493-512 (GVVVSKGDDSVPPDSGVEPS). The residue at position 512 (Ser-512) is a Phosphoserine. Over residues 528-658 (QEKEDGLKEE…KQDDQKEEGA (131 aa)) the composition is skewed to basic and acidic residues. Copy 1 of the repeat occupies 532 to 545 (DGLKEEGGPPEGKG). The 7 X 14 AA tandem repeats stretch occupies residues 532 to 622 (DGLKEEGGPP…EEEGPLQKKE (91 aa)). Residues 546–552 (EPPEGKG) form a 2; truncated repeat. 5 consecutive repeat copies span residues 553–566 (DSVK…EGKG), 567–580 (DGVK…EGKG), 581–594 (DGVK…EGKG), 595–608 (DGVK…EGKG), and 609–622 (EGLK…QKKE). A phosphothreonine mark is found at Thr-628 and Thr-674. Phosphoserine is present on residues Ser-701, Ser-754, and Ser-755.

Belongs to the intermediate filament family. As to quaternary structure, part of a complex required for lens intermediate filament formation composed of BFSP1, BFSP2 and CRYAA. Identified in a complex that contains VIM, EZR, AHNAK, BFSP1, BFSP2, ANK2, PLEC, PRX and spectrin. Found in a complex composed of PPL (via C-terminal linker domain), BFSP1 and BFSP2 in the retinal lens. Within the complex interacts with BFSP2. Interacts (via C-terminus) with MIP (via C-terminus) in aged lens fiber cells. Proteolytically cleaved during lens cell fiber differentiation with increased fragmentation as fiber cell age increases. Post-translationally, myristoylated at Gly-433 following proteolytic cleavage at Asp-432. In terms of processing, acetylated at Ala-41 following proteolytic cleavage at Leu-40. As to expression, abundantly expressed in both the inner and outer cortex of the retina, expressed at a lower level in the nucleus of the retina (at protein level). Detected in eye lens fiber cells (at protein level).

It localises to the cell membrane. It is found in the cytoplasm. The protein localises to the cytoskeleton. The protein resides in the cell cortex. Functionally, required for the correct formation of lens intermediate filaments as part of a complex composed of BFSP1, BFSP2 and CRYAA. Involved in altering the calcium regulation of MIP water permeability. In Bos taurus (Bovine), this protein is Filensin (BFSP1).